The following is a 247-amino-acid chain: MENFLLEKIINKKLSSDQYSDVVPNGLQIEGEKIIKKIITGVTACQELLDKALSYGANAIIVHHGYFWKNESQCIHNMTRKRLTTILSNNINLYSWHIPLDIHPKLGNNAQIAKKLNIRIKGYILPYLFWGTLEENINAFDFSKKIEKKYEKKPIHIYANAPIYISRIAWCSGRGQNFIKQAYNFGIDAFLTGEISEETMHIAKELGIHFFSIGHHATEKDGIKSLGKWLNNKYDLDVTFIDIHNPA.

Positions 63, 64, 101, 215, and 219 each coordinate a divalent metal cation.

Belongs to the GTP cyclohydrolase I type 2/NIF3 family. Homohexamer.

In Buchnera aphidicola subsp. Schizaphis graminum (strain Sg), this protein is GTP cyclohydrolase 1 type 2 homolog.